The primary structure comprises 1402 residues: DNA-directed RNA polymerase subunit beta' (1402 aa).

Zn(2+) is bound by residues Cys70, Cys72, Cys85, and Cys88. Residues Asp460, Asp462, and Asp464 each contribute to the Mg(2+) site. 4 residues coordinate Zn(2+): Cys812, Cys886, Cys893, and Cys896. The tract at residues 1373-1402 is disordered; it reads DRFLNGSASSNEKSRSAGVLEATDEESAGD.

The protein belongs to the RNA polymerase beta' chain family. As to quaternary structure, the RNAP catalytic core consists of 2 alpha, 1 beta, 1 beta' and 1 omega subunit. When a sigma factor is associated with the core the holoenzyme is formed, which can initiate transcription. It depends on Mg(2+) as a cofactor. Zn(2+) serves as cofactor.

The enzyme catalyses RNA(n) + a ribonucleoside 5'-triphosphate = RNA(n+1) + diphosphate. Its function is as follows. DNA-dependent RNA polymerase catalyzes the transcription of DNA into RNA using the four ribonucleoside triphosphates as substrates. This chain is DNA-directed RNA polymerase subunit beta', found in Dichelobacter nodosus (strain VCS1703A).